Here is a 230-residue protein sequence, read N- to C-terminus: MFFKRWFWRIFLFFIAVIFVYQFWIFSQIVYWNYFNPSSSAFMQTRLETLREKNTKAALRTRWIPYEQISPHLKRAIIAAEDAKFLEHEGFDFDAIQKAYEKNLKKGRLIMGGSTISQQLAKNLFLSGDKTPWRKLQEAFITLMLEKVMSKRRILEIYLNVIEWGNVVFGAEAAARHYYGISASSVSREQAARLAAMVPSPRFYDENRNTPWLSKKTRMILGRMASASIP.

The chain crosses the membrane as a helical span at residues 10 to 30 (IFLFFIAVIFVYQFWIFSQIV).

It belongs to the glycosyltransferase 51 family.

The protein resides in the cell inner membrane. It catalyses the reaction [GlcNAc-(1-&gt;4)-Mur2Ac(oyl-L-Ala-gamma-D-Glu-L-Lys-D-Ala-D-Ala)](n)-di-trans,octa-cis-undecaprenyl diphosphate + beta-D-GlcNAc-(1-&gt;4)-Mur2Ac(oyl-L-Ala-gamma-D-Glu-L-Lys-D-Ala-D-Ala)-di-trans,octa-cis-undecaprenyl diphosphate = [GlcNAc-(1-&gt;4)-Mur2Ac(oyl-L-Ala-gamma-D-Glu-L-Lys-D-Ala-D-Ala)](n+1)-di-trans,octa-cis-undecaprenyl diphosphate + di-trans,octa-cis-undecaprenyl diphosphate + H(+). It functions in the pathway cell wall biogenesis; peptidoglycan biosynthesis. In terms of biological role, peptidoglycan polymerase that catalyzes glycan chain elongation from lipid-linked precursors. This chain is Biosynthetic peptidoglycan transglycosylase, found in Nitrosospira multiformis (strain ATCC 25196 / NCIMB 11849 / C 71).